The sequence spans 270 residues: Chymotrypsin-like elastase family member 3B (270 aa).

Residues 1–15 constitute a signal peptide (or 16); it reads MMLRLLSSLLLVAVA. Residues 16 to 28 constitute a propeptide, activation peptide; that stretch reads SGYGPPSSRPSSR. The Peptidase S1 domain maps to 29-268; that stretch reads VVNGEDAVPY…FIDWIEETIA (240 aa). A disulfide bridge links Cys-58 with Cys-74. His-73 acts as the Charge relay system in catalysis. Residue Asn-114 is glycosylated (N-linked (GlcNAc...) asparagine). Residues Cys-117 and Cys-120 are joined by a disulfide bond. Residue Asp-123 is the Charge relay system of the active site. Intrachain disulfides connect Cys-157/Cys-223, Cys-188/Cys-204, and Cys-213/Cys-244. Ser-217 acts as the Charge relay system in catalysis.

This sequence belongs to the peptidase S1 family. Elastase subfamily. As to expression, pancreas. Not detectable in keratinocytes.

It carries out the reaction Preferential cleavage: Ala-|-Xaa. Does not hydrolyze elastin.. In terms of biological role, efficient protease with alanine specificity but only little elastolytic activity. This chain is Chymotrypsin-like elastase family member 3B (CELA3B), found in Homo sapiens (Human).